Reading from the N-terminus, the 1109-residue chain is Hybrid signal transduction histidine kinase F (1109 aa).

The region spanning 237 to 289 (LSTETTITKKNGEKYPAEVFVKEISDIHSNSIGIMIIVRDITDQIRLKEMNIE) is the PAC domain. The Histidine kinase domain occupies 324 to 547 (TISHEIRTPL…LFSVTLNFEQ (224 aa)). His-327 carries the post-translational modification Phosphohistidine; by autocatalysis. A coiled-coil region spans residues 719–760 (SNLIQTISQIDNQQQQQQQQLQQQEQEQQHQQQQLQQEQQFV). A compositionally biased stretch (low complexity) spans 739–758 (LQQQEQEQQHQQQQLQQEQQ). Residues 739-819 (LQQQEQEQQH…TSSDSGESDE (81 aa)) are disordered. Residues 767–782 (DSSEKKTTPKKDRGKY) show a composition bias toward basic and acidic residues. A Response regulatory domain is found at 928–1048 (RILLVDDNAV…PLGELVKKYL (121 aa)). Asp-977 is modified (4-aspartylphosphate). The segment covering 1052 to 1099 (NNNNNNNNNNNNNNNNNSNNNNSNSNSNPNSNSNSNSNSNSNPNQNPN) has biased composition (low complexity). The interval 1052–1109 (NNNNNNNNNNNNNNNNNSNNNNSNSNSNPNSNSNSNSNSNSNPNQNPNYCNNLPTDFI) is disordered. Residues 1100-1109 (YCNNLPTDFI) are compositionally biased toward polar residues.

The enzyme catalyses ATP + protein L-histidine = ADP + protein N-phospho-L-histidine.. Functionally, acts as a receptor histidine kinase for a signal transduction pathway. This protein undergoes an ATP-dependent autophosphorylation at a conserved histidine residue in the kinase core, and a phosphoryl group is then transferred to a conserved aspartate residue in the receiver domain. The sequence is that of Hybrid signal transduction histidine kinase F (dhkF) from Dictyostelium discoideum (Social amoeba).